A 321-amino-acid polypeptide reads, in one-letter code: tRNA U34 carboxymethyltransferase (321 aa).

Residues lysine 90, tryptophan 104, lysine 109, glycine 129, 151–153 (DPT), 180–181 (IE), methionine 195, tyrosine 199, and arginine 314 contribute to the carboxy-S-adenosyl-L-methionine site.

Belongs to the class I-like SAM-binding methyltransferase superfamily. CmoB family. In terms of assembly, homotetramer.

The catalysed reaction is carboxy-S-adenosyl-L-methionine + 5-hydroxyuridine(34) in tRNA = 5-carboxymethoxyuridine(34) in tRNA + S-adenosyl-L-homocysteine + H(+). Its function is as follows. Catalyzes carboxymethyl transfer from carboxy-S-adenosyl-L-methionine (Cx-SAM) to 5-hydroxyuridine (ho5U) to form 5-carboxymethoxyuridine (cmo5U) at position 34 in tRNAs. The chain is tRNA U34 carboxymethyltransferase from Haemophilus influenzae (strain PittEE).